A 344-amino-acid polypeptide reads, in one-letter code: Heat-inducible transcription repressor HrcA (344 aa).

The protein belongs to the HrcA family.

In terms of biological role, negative regulator of class I heat shock genes (grpE-dnaK-dnaJ and groELS operons). Prevents heat-shock induction of these operons. The polypeptide is Heat-inducible transcription repressor HrcA (Corynebacterium aurimucosum (strain ATCC 700975 / DSM 44827 / CIP 107346 / CN-1) (Corynebacterium nigricans)).